The sequence spans 343 residues: N-acetyl-gamma-glutamyl-phosphate reductase (343 aa).

Residue cysteine 147 is part of the active site.

Belongs to the NAGSA dehydrogenase family. Type 1 subfamily.

The protein resides in the cytoplasm. It carries out the reaction N-acetyl-L-glutamate 5-semialdehyde + phosphate + NADP(+) = N-acetyl-L-glutamyl 5-phosphate + NADPH + H(+). The protein operates within amino-acid biosynthesis; L-arginine biosynthesis; N(2)-acetyl-L-ornithine from L-glutamate: step 3/4. Functionally, catalyzes the NADPH-dependent reduction of N-acetyl-5-glutamyl phosphate to yield N-acetyl-L-glutamate 5-semialdehyde. The polypeptide is N-acetyl-gamma-glutamyl-phosphate reductase (Staphylococcus aureus (strain MRSA252)).